We begin with the raw amino-acid sequence, 1321 residues long: C-Jun-amino-terminal kinase-interacting protein 4 (1321 aa).

Residue Met1 is modified to N-acetylmethionine. One can recognise an RH1 domain in the interval 7 to 95; the sequence is VVYQEEPGGS…ITQYEREKAL (89 aa). The stretch at 66-166 forms a coiled coil; the sequence is AQDQEHQVEL…NALHQRHTEM (101 aa). 5 positions are modified to phosphoserine: Ser109, Ser183, Ser185, Ser194, and Ser203. Residues 203 to 292 are disordered; it reads SLGIFPLPAG…SDVATIPTDT (90 aa). Thr217 is modified (phosphothreonine). A compositionally biased stretch (polar residues) spans 236-253; that stretch reads ELSQPRSHTSLKVSNSPE. A phosphoserine mark is found at Ser238, Ser251, Ser265, Ser268, and Ser272. The span at 266–285 shows a compositional bias: polar residues; sequence DVSQGGSKATTPASTANSDV. Residue Thr292 is modified to Phosphothreonine. 4 positions are modified to phosphoserine: Ser311, Ser329, Ser332, and Ser347. Phosphothreonine is present on residues Thr348, Thr365, and Thr418. A coiled-coil region spans residues 408-534; it reads REVENLILEN…LQEAVRWTEM (127 aa). Residues 473–489 show a composition bias toward basic and acidic residues; it reads LRKARAEAEDARQKAKD. Disordered stretches follow at residues 473 to 500 and 563 to 600; these read LRKA…TAQR and SSNT…SQLP. Positions 500 to 571 constitute an RH2 domain; that stretch reads RKRFTRVEMA…SSSNTTKKPE (72 aa). Residue Thr586 is modified to Phosphothreonine. The residue at position 588 (Ser588) is a Phosphoserine. Position 595 is a phosphothreonine (Thr595). Phosphoserine is present on residues Ser705, Ser728, Ser730, Ser732, and Ser733. Residues 724 to 758 are a coiled coil; sequence SKQRSASQSSLDKLDQELKEQQKELKNQEELSSLV. A disordered region spans residues 854–906; that stretch reads GAATSPSTNGASPVMDKPPEMEAENSEVDENVPTAEEATEATEGNAGSAEDTV. The span at 855–864 shows a compositional bias: polar residues; sequence AATSPSTNGA. Acidic residues predominate over residues 874–883; it reads MEAENSEVDE. Residues 894–903 show a composition bias toward low complexity; sequence ATEGNAGSAE. Ser1188 is subject to Phosphoserine. A disordered region spans residues 1239–1266; it reads PQSSSSGTDLTGDKAGPSAQEPGSQTPL. Thr1264 bears the Phosphothreonine mark.

This sequence belongs to the JIP scaffold family. Homodimer. The homodimer interacts with ARF6, forming a heterotetramer. Homooligomer. Interacts with MAX, MAPK14, MAP3K3, MYC, KNS2 and MAP2K4. Interaction with KNS2 is important in the formation of ternary complex with MAPK8. Interacts with NFKB1. Interacts with PIP4P1. Interacts with PIKFYVE. In terms of assembly, interacts with MAPK8, MAPK9, MAPK10. In terms of processing, phosphorylated by MAPK8 and MAPK14. In terms of tissue distribution, expressed only in testis on the round spermatids of stage I, II and II. Absent in spermatogonia and spermatocyte. Expressed in testis and in acute myeloid leukemia (AML) patients. As to expression, expressed in testis.

The protein resides in the cytoplasm. The protein localises to the perinuclear region. It localises to the lysosome membrane. It is found in the cytoplasmic vesicle. Its subcellular location is the secretory vesicle. The protein resides in the acrosome. With respect to regulation, may play a role in spermatozoa-egg-interaction. The JNK-interacting protein (JIP) group of scaffold proteins selectively mediates JNK signaling by aggregating specific components of the MAPK cascade to form a functional JNK signaling module. Regulates lysosomal positioning by acting as an adapter protein which links PIP4P1-positive lysosomes to the dynein-dynactin complex. Assists PIKFYVE selective functionality in microtubule-based endosome-to-TGN trafficking. The polypeptide is C-Jun-amino-terminal kinase-interacting protein 4 (Homo sapiens (Human)).